Here is a 205-residue protein sequence, read N- to C-terminus: Proteasome subunit beta type-3 (205 aa).

Position 2 is an N-acetylserine (serine 2). The residue at position 77 (lysine 77) is an N6-acetyllysine.

It belongs to the peptidase T1B family. As to quaternary structure, the 26S proteasome consists of a 20S proteasome core and two 19S regulatory subunits. The 20S proteasome core is a barrel-shaped complex made of 28 subunits that are arranged in four stacked rings. The two outer rings are each formed by seven alpha subunits, and the two inner rings are formed by seven beta subunits. The proteolytic activity is exerted by three beta-subunits PSMB5, PSMB6 and PSMB7. In terms of assembly, (Microbial infection) Interacts with HIV-1 TAT protein.

The protein localises to the cytoplasm. It localises to the nucleus. Its function is as follows. Non-catalytic component of the 20S core proteasome complex involved in the proteolytic degradation of most intracellular proteins. This complex plays numerous essential roles within the cell by associating with different regulatory particles. Associated with two 19S regulatory particles, forms the 26S proteasome and thus participates in the ATP-dependent degradation of ubiquitinated proteins. The 26S proteasome plays a key role in the maintenance of protein homeostasis by removing misfolded or damaged proteins that could impair cellular functions, and by removing proteins whose functions are no longer required. Associated with the PA200 or PA28, the 20S proteasome mediates ubiquitin-independent protein degradation. This type of proteolysis is required in several pathways including spermatogenesis (20S-PA200 complex) or generation of a subset of MHC class I-presented antigenic peptides (20S-PA28 complex). The chain is Proteasome subunit beta type-3 from Homo sapiens (Human).